The primary structure comprises 286 residues: Sulfate transport system permease protein CysW (286 aa).

The next 6 helical transmembrane spans lie at 20–40, 74–94, 108–128, 145–165, 207–227, and 255–275; these read LLPL…IIIP, LMGV…AFAI, VIDL…VLLY, IIFA…PFVA, LYGV…VSVV, and YTAA…KALL. The 204-residue stretch at 69–272 folds into the ABC transmembrane type-1 domain; the sequence is IRLTLLMGVI…GISLVTLVLK (204 aa).

Belongs to the binding-protein-dependent transport system permease family. CysTW subfamily. As to quaternary structure, the complex is composed of two ATP-binding proteins (CysA), two transmembrane proteins (CysT and CysW) and a solute-binding protein (CysP).

The protein resides in the cell inner membrane. Functionally, part of the ABC transporter complex CysAWTP (TC 3.A.1.6.1) involved in sulfate/thiosulfate import. Probably responsible for the translocation of the substrate across the membrane. In Synechococcus elongatus (strain ATCC 33912 / PCC 7942 / FACHB-805) (Anacystis nidulans R2), this protein is Sulfate transport system permease protein CysW (cysW).